The primary structure comprises 332 residues: Holliday junction branch migration complex subunit RuvB (332 aa).

The large ATPase domain (RuvB-L) stretch occupies residues 1–182 (MKLNKNSELK…FGLILKLNYY (182 aa)). ATP contacts are provided by residues L21, R22, G63, K66, T67, T68, 129–131 (EDY), R172, Y182, and R219. T67 is a Mg(2+) binding site. Residues 183–253 (SEDELELIIK…ISEIALEKLT (71 aa)) are small ATPAse domain (RuvB-S). The head domain (RuvB-H) stretch occupies residues 256 to 332 (KNGLDDADYT…FKLFKNDKIK (77 aa)). The DNA site is built by R311 and R316.

It belongs to the RuvB family. In terms of assembly, homohexamer. Forms an RuvA(8)-RuvB(12)-Holliday junction (HJ) complex. HJ DNA is sandwiched between 2 RuvA tetramers; dsDNA enters through RuvA and exits via RuvB. An RuvB hexamer assembles on each DNA strand where it exits the tetramer. Each RuvB hexamer is contacted by two RuvA subunits (via domain III) on 2 adjacent RuvB subunits; this complex drives branch migration. In the full resolvosome a probable DNA-RuvA(4)-RuvB(12)-RuvC(2) complex forms which resolves the HJ.

It localises to the cytoplasm. It catalyses the reaction ATP + H2O = ADP + phosphate + H(+). The RuvA-RuvB-RuvC complex processes Holliday junction (HJ) DNA during genetic recombination and DNA repair, while the RuvA-RuvB complex plays an important role in the rescue of blocked DNA replication forks via replication fork reversal (RFR). RuvA specifically binds to HJ cruciform DNA, conferring on it an open structure. The RuvB hexamer acts as an ATP-dependent pump, pulling dsDNA into and through the RuvAB complex. RuvB forms 2 homohexamers on either side of HJ DNA bound by 1 or 2 RuvA tetramers; 4 subunits per hexamer contact DNA at a time. Coordinated motions by a converter formed by DNA-disengaged RuvB subunits stimulates ATP hydrolysis and nucleotide exchange. Immobilization of the converter enables RuvB to convert the ATP-contained energy into a lever motion, pulling 2 nucleotides of DNA out of the RuvA tetramer per ATP hydrolyzed, thus driving DNA branch migration. The RuvB motors rotate together with the DNA substrate, which together with the progressing nucleotide cycle form the mechanistic basis for DNA recombination by continuous HJ branch migration. Branch migration allows RuvC to scan DNA until it finds its consensus sequence, where it cleaves and resolves cruciform DNA. The chain is Holliday junction branch migration complex subunit RuvB from Phytoplasma mali (strain AT).